The following is a 315-amino-acid chain: Zinc metalloproteinase nas-4 (315 aa).

Positions 1 to 20 (MMTIQRYSLVFCAIFATCWT) are cleaved as a signal peptide. An N-linked (GlcNAc...) asparagine glycan is attached at Asn-71. The Peptidase M12A domain occupies 95–290 (NAIKQIYRRW…RKINKLYNCP (196 aa)). 2 disulfide bridges follow: Cys-137–Cys-289 and Cys-160–Cys-179. His-187 contributes to the Zn(2+) binding site. Glu-188 is a catalytic residue. His-191 and His-197 together coordinate Zn(2+). The segment at 291–315 (GVSGNNNNNNNNQINSNSIVNHPQV) is disordered.

It depends on Zn(2+) as a cofactor. As to expression, digestive tract. Found in the pharynx cells of the procorpus, metacorpus, isthmus and terminal bulb, and in the terminal bulb lumen.

The protein resides in the secreted. In terms of biological role, metalloprotease. May be involved in digestion. The chain is Zinc metalloproteinase nas-4 (nas-4) from Caenorhabditis elegans.